A 953-amino-acid polypeptide reads, in one-letter code: Translation initiation factor IF-2 (953 aa).

Disordered stretches follow at residues 52–241 (KASK…QQEA) and 279–363 (TKLK…TERK). Basic and acidic residues-rich tracts occupy residues 80–89 (TGSEHVEKTQ), 98–111 (FKAE…EQAA), and 140–188 (QGDK…ENHK). Positions 191-207 (RFTNQKKQGRQEPQSKS) are enriched in polar residues. A compositionally biased stretch (basic and acidic residues) spans 229–241 (RQSETRFRAQQEA). Residues 282-291 (KSSNISAKST) are compositionally biased toward polar residues. The span at 300–317 (ARPEKNRELTHHSQEGQK) shows a compositional bias: basic and acidic residues. Residues 322 to 338 (SWNSQNQVRNQKNSNWN) are compositionally biased toward low complexity. Residues 339 to 348 (KNKKTKKGKN) are compositionally biased toward basic residues. The tr-type G domain maps to 454 to 623 (ERAPVVTIMG…LLVAEVEELK (170 aa)). A G1 region spans residues 463 to 470 (GHVDHGKT). 463–470 (GHVDHGKT) lines the GTP pocket. Positions 488–492 (GITQH) are G2. Residues 509–512 (DTPG) are G3. GTP is bound by residues 509–513 (DTPGH) and 563–566 (NKID). Residues 563–566 (NKID) form a G4 region. The interval 599–601 (SAK) is G5.

It belongs to the TRAFAC class translation factor GTPase superfamily. Classic translation factor GTPase family. IF-2 subfamily.

It localises to the cytoplasm. Its function is as follows. One of the essential components for the initiation of protein synthesis. Protects formylmethionyl-tRNA from spontaneous hydrolysis and promotes its binding to the 30S ribosomal subunits. Also involved in the hydrolysis of GTP during the formation of the 70S ribosomal complex. The polypeptide is Translation initiation factor IF-2 (Streptococcus pyogenes serotype M4 (strain MGAS10750)).